A 739-amino-acid chain; its full sequence is DNA ligase (739 aa).

NAD(+) is bound by residues 34–38 (DADYD), 83–84 (SL), and Glu-117. Lys-119 acts as the N6-AMP-lysine intermediate in catalysis. NAD(+) is bound by residues Arg-140, Glu-175, Lys-291, and Lys-315. Cys-420, Cys-423, Cys-438, and Cys-444 together coordinate Zn(2+). Residues 660 to 739 (ADDSPVAGKT…DGWLDLIGQA (80 aa)) enclose the BRCT domain.

Belongs to the NAD-dependent DNA ligase family. LigA subfamily. Mg(2+) is required as a cofactor. Requires Mn(2+) as cofactor.

The enzyme catalyses NAD(+) + (deoxyribonucleotide)n-3'-hydroxyl + 5'-phospho-(deoxyribonucleotide)m = (deoxyribonucleotide)n+m + AMP + beta-nicotinamide D-nucleotide.. Its function is as follows. DNA ligase that catalyzes the formation of phosphodiester linkages between 5'-phosphoryl and 3'-hydroxyl groups in double-stranded DNA using NAD as a coenzyme and as the energy source for the reaction. It is essential for DNA replication and repair of damaged DNA. The polypeptide is DNA ligase (Ruegeria sp. (strain TM1040) (Silicibacter sp.)).